The following is a 908-amino-acid chain: Mechanosensitive ion channel protein 8 (908 aa).

A compositionally biased stretch (polar residues) spans 1–25; it reads MDFRNSFKSHSSYKQIRSPGDQSEP. Disordered stretches follow at residues 1 to 88, 148 to 172, 190 to 221, and 242 to 265; these read MDFR…HTAV, DQENDDVSHQTMPTPTSTARTSFDA, VAGSVPSSSSHSSSSSSATMRTNQDQPQLQEE, and VKTRSRLQDPPREEETPYSGWRSG. Positions 31–70 are enriched in basic and acidic residues; sequence PILHDHHPDHSGMVVDDQKPDSTRSSLDDGRNAPVERDAS. 2 stretches are compositionally biased toward polar residues: residues 75–85 and 156–171; these read QDNTTGTSTDH and HQTMPTPTSTARTSFD. The segment covering 196–206 has biased composition (low complexity); the sequence is SSSSHSSSSSS. Residues 207–218 are compositionally biased toward polar residues; that stretch reads ATMRTNQDQPQL. Residues 247–256 are compositionally biased toward basic and acidic residues; that stretch reads RLQDPPREEE. Helical transmembrane passes span 298–318, 341–361, 381–401, 411–431, 673–693, and 709–729; these read AITLLQWLSLVAIIAALACSL, LVLICGRLVSGWGIRIVVFFI, AVQNCLWLGLVLLAWHFLFDK, FLPYVTKILVCFLLSTILWLI, MINIVTAIVIVVIWLVLLEIA, and AFIFGNTVKTVFESIIFLFIV.

The protein belongs to the MscS (TC 1.A.23) family. In terms of tissue distribution, expressed in tricellular and mature pollen, and in germinating tube. Not detected in leaves or roots.

It is found in the cell membrane. It localises to the endomembrane system. Its activity is regulated as follows. Not regulated by MgCl(2), ruthenium red or tetramethylammonium-Cl. Mechanosensitive channel that opens in response to stretch forces in the membrane lipid bilayer. Exhibits a 6.3-fold preference for chloride over sodium. Regulates osmotic forces during pollen hydration and germination. The polypeptide is Mechanosensitive ion channel protein 8 (Arabidopsis thaliana (Mouse-ear cress)).